The chain runs to 523 residues: Keratin, type II cytoskeletal 71 (523 aa).

Residues 1–129 (MSRQFTCKSG…DPEIQKVRAQ (129 aa)) are head. The interval 130-165 (EREQIKALNNKFASFIDKVRFLEQQNQVLETKWELL) is coil 1A. One can recognise an IF rod domain in the interval 130–443 (EREQIKALNN…KLLESEECRM (314 aa)). The segment at 166–184 (QQLDLNNCKNNLEPILEGY) is linker 1. A coil 1B region spans residues 185-276 (ISNLRKQLET…CLFEAEITQI (92 aa)). The linker 12 stretch occupies residues 277 to 300 (QSHISDMSVILSMDNNRNLDLDSI). Residues 301-439 (IDEVRTQYEE…ATYRKLLESE (139 aa)) form a coil 2 region. Residues 440-523 (ECRMSGEFPS…LSAPSKKTSR (84 aa)) are tail. A disordered region spans residues 492 to 523 (GGEGRSRGSANDYKDTLGKGSSLSAPSKKTSR). A compositionally biased stretch (basic and acidic residues) spans 493–508 (GEGRSRGSANDYKDTL). A compositionally biased stretch (polar residues) spans 510–523 (KGSSLSAPSKKTSR).

Belongs to the intermediate filament family. As to quaternary structure, heterodimer of a type I and a type II keratin. Associates with KRT16 and/or KRT17. In terms of tissue distribution, highly expressed in hair follicles from scalp. Specifically expressed in the inner root sheath (IRS) of the hair follicle. Present in the all 3 IRS layers: the cuticle, the Henle and the Huxley layers. Also detected in the pseudopods of specialized Huxley cells, termed Fluegelzellen, along the area of differentiated Henle cells (at protein level).

It localises to the cytoplasm. The protein localises to the cytoskeleton. Plays a central role in hair formation. Essential component of keratin intermediate filaments in the inner root sheath (IRS) of the hair follicle. The chain is Keratin, type II cytoskeletal 71 (KRT71) from Homo sapiens (Human).